We begin with the raw amino-acid sequence, 150 residues long: Ventricular natriuretic peptide (150 aa).

Positions 1–21 are cleaved as a signal peptide; sequence MAKSGIYLGCFILILIQNMVA. Residues 52–75 form a disordered region; it reads EEPEVYPESEDMKMDAEEEDAGIS. C120 and C136 form a disulfide bridge.

The protein belongs to the natriuretic peptide family. Heart ventricle, and to a lower extent in heart atrium.

It localises to the secreted. Functionally, exhibits natriuretic and vasodepressor activity. This Anguilla japonica (Japanese eel) protein is Ventricular natriuretic peptide (vnp).